A 303-amino-acid polypeptide reads, in one-letter code: Ribosomal large subunit pseudouridine synthase C (303 aa).

The region spanning 11-87 (FRLDKYLKRL…AEIKLAKKIL (77 aa)) is the S4 RNA-binding domain. The active site involves Asp-140.

Belongs to the pseudouridine synthase RluA family.

It catalyses the reaction uridine(955/2504/2580) in 23S rRNA = pseudouridine(955/2504/2580) in 23S rRNA. Functionally, responsible for synthesis of pseudouridine from uracil at positions 955, 2504 and 2580 in 23S ribosomal RNA. The protein is Ribosomal large subunit pseudouridine synthase C (rluC) of Rickettsia prowazekii (strain Madrid E).